We begin with the raw amino-acid sequence, 418 residues long: Isocitrate dehydrogenase [NADP] (418 aa).

Residue Thr106 participates in NADP(+) binding. The D-threo-isocitrate site is built by Ser115, Asn117, Arg121, Arg131, and Arg155. Phosphoserine is present on Ser115. The residue at position 193 (Thr193) is a Phosphothreonine. Asp309 provides a ligand contact to Mg(2+). NADP(+) contacts are provided by residues 341–347 (HGTAPKY), Asn354, Tyr393, and Arg397.

This sequence belongs to the isocitrate and isopropylmalate dehydrogenases family. In terms of assembly, homodimer. Mg(2+) is required as a cofactor. Requires Mn(2+) as cofactor.

The protein resides in the secreted. It catalyses the reaction D-threo-isocitrate + NADP(+) = 2-oxoglutarate + CO2 + NADPH. Functionally, catalyzes the oxidative decarboxylation of isocitrate to 2-oxoglutarate and carbon dioxide with the concomitant reduction of NADP(+). This Pseudomonas aeruginosa (strain UCBPP-PA14) protein is Isocitrate dehydrogenase [NADP] (icd).